The chain runs to 648 residues: Macrolide export ATP-binding/permease protein MacB (648 aa).

Residues 5-243 (LELKDIRRSY…TGGTEPVVNT (239 aa)) form the ABC transporter domain. Residue 41 to 48 (GASGSGKS) coordinates ATP. The next 4 helical transmembrane spans lie at 273-293 (LLTM…VVVG), 523-543 (LFLT…VMNI), 576-596 (AVLV…LIAF), and 611-631 (PLAL…FGWL).

Belongs to the ABC transporter superfamily. Macrolide exporter (TC 3.A.1.122) family. In terms of assembly, homodimer. Part of the tripartite efflux system MacAB-TolC, which is composed of an inner membrane transporter, MacB, a periplasmic membrane fusion protein, MacA, and an outer membrane component, TolC. The complex forms a large protein conduit and can translocate molecules across both the inner and outer membranes. Interacts with MacA.

It is found in the cell inner membrane. Its function is as follows. Part of the tripartite efflux system MacAB-TolC. MacB is a non-canonical ABC transporter that contains transmembrane domains (TMD), which form a pore in the inner membrane, and an ATP-binding domain (NBD), which is responsible for energy generation. Confers resistance against macrolides. The polypeptide is Macrolide export ATP-binding/permease protein MacB (Escherichia coli (strain UTI89 / UPEC)).